Consider the following 198-residue polypeptide: MAKKKQIGRRVEGWKAKSWYKVYVPEAFGSTPIGETIAADSANLVGRVMSTTLGEIAQDFAKQHIKMKFKISRVAGDAAYTEFIGHELTKDYLRSLVKRRTSRIDSHIMGSTKDGKRIHLTVTCYTLIGANSSQIHAIRNVISAQMATFVAQNDWATVVDGIVTGSISRDMLAQVKGIFPIRRIEVIKSKIESKVIIA.

This sequence belongs to the eukaryotic ribosomal protein eS1 family.

This chain is Small ribosomal subunit protein eS1, found in Methanosphaerula palustris (strain ATCC BAA-1556 / DSM 19958 / E1-9c).